Consider the following 69-residue polypeptide: Protein transport protein Sec61 subunit gamma (69 aa).

The Cytoplasmic portion of the chain corresponds to 1 to 40 (MDILEETAAPLKDFAKNSIRLFKKCTKPDAQEFQKIALAT). The helical transmembrane segment at 41–61 (LIGFAIMGFIGFFVKLIHIPI) threads the bilayer. The Extracellular portion of the chain corresponds to 62-69 (NNILVGGV).

The protein belongs to the SecE/SEC61-gamma family. As to quaternary structure, heterotrimeric complex composed of SEC61-alpha, SEC61-beta and SEC61-gamma.

It is found in the endoplasmic reticulum membrane. In terms of biological role, necessary for protein translocation in the endoplasmic reticulum. This chain is Protein transport protein Sec61 subunit gamma (sec61g), found in Dictyostelium discoideum (Social amoeba).